Reading from the N-terminus, the 505-residue chain is Transcription factor VHR2 (505 aa).

A compositionally biased stretch (basic and acidic residues) spans 1–16 (MIDDTENSKIHLEGSH). Disordered regions lie at residues 1–23 (MIDDTENSKIHLEGSHKTGKYTG), 105–179 (NRKR…LPYP), and 421–460 (QSNPMRPHSTSEVLSAHSSTKDASTPGKEEPRVTRSSTSA). Positions 133–148 (PSSSNMGSCSASNASS) are enriched in low complexity. Residues 421–443 (QSNPMRPHSTSEVLSAHSSTKDA) are compositionally biased toward polar residues.

The protein belongs to the VHR1 family.

It localises to the nucleus. Transcription factor that regulates ERG9, but seems to have a more global function in transcription. The sequence is that of Transcription factor VHR2 (VHR2) from Saccharomyces cerevisiae (strain ATCC 204508 / S288c) (Baker's yeast).